A 352-amino-acid polypeptide reads, in one-letter code: Photosystem II protein D1 (352 aa).

Thr-2 bears the N-acetylthreonine mark. Thr-2 is subject to Phosphothreonine. Transmembrane regions (helical) follow at residues 29–46, 118–133, and 142–156; these read YIGW…TATS, HFFL…EWEL, and WIAV…AATA. His-118 is a chlorophyll a binding site. Tyr-126 contributes to the pheophytin a binding site. [CaMn4O5] cluster contacts are provided by Asp-170 and Glu-189. A helical transmembrane segment spans residues 197-218; sequence FHMLGVAGVFGGSLFSAMHGSL. His-198 is a chlorophyll a binding site. Residues His-215 and 264 to 265 contribute to the a quinone site; that span reads SF. His-215 provides a ligand contact to Fe cation. His-272 contacts Fe cation. Residues 274 to 288 traverse the membrane as a helical segment; sequence FLAAWPVVGIWFTAL. [CaMn4O5] cluster is bound by residues His-332, Glu-333, Asp-342, and Ala-344. The propeptide occupies 345-352; that stretch reads SVEAPSIA.

Belongs to the reaction center PufL/M/PsbA/D family. As to quaternary structure, PSII is composed of 1 copy each of membrane proteins PsbA, PsbB, PsbC, PsbD, PsbE, PsbF, PsbH, PsbI, PsbJ, PsbK, PsbL, PsbM, PsbT, PsbX, PsbY, PsbZ, Psb30/Ycf12, at least 3 peripheral proteins of the oxygen-evolving complex and a large number of cofactors. It forms dimeric complexes. The D1/D2 heterodimer binds P680, chlorophylls that are the primary electron donor of PSII, and subsequent electron acceptors. It shares a non-heme iron and each subunit binds pheophytin, quinone, additional chlorophylls, carotenoids and lipids. D1 provides most of the ligands for the Mn4-Ca-O5 cluster of the oxygen-evolving complex (OEC). There is also a Cl(-1) ion associated with D1 and D2, which is required for oxygen evolution. The PSII complex binds additional chlorophylls, carotenoids and specific lipids. serves as cofactor. Post-translationally, tyr-161 forms a radical intermediate that is referred to as redox-active TyrZ, YZ or Y-Z. C-terminally processed by CTPA; processing is essential to allow assembly of the oxygen-evolving complex and thus photosynthetic growth.

It is found in the plastid. It localises to the chloroplast thylakoid membrane. The catalysed reaction is 2 a plastoquinone + 4 hnu + 2 H2O = 2 a plastoquinol + O2. Its function is as follows. Photosystem II (PSII) is a light-driven water:plastoquinone oxidoreductase that uses light energy to abstract electrons from H(2)O, generating O(2) and a proton gradient subsequently used for ATP formation. It consists of a core antenna complex that captures photons, and an electron transfer chain that converts photonic excitation into a charge separation. The D1/D2 (PsbA/PsbD) reaction center heterodimer binds P680, the primary electron donor of PSII as well as several subsequent electron acceptors. This is Photosystem II protein D1 from Chlorella ellipsoidea.